The chain runs to 274 residues: uncharacterized protein (274 aa).

Residues Met1–Ala30 form the signal peptide.

It to M.tuberculosis Rv1405c.

This is an uncharacterized protein from Mycobacterium tuberculosis (strain CDC 1551 / Oshkosh).